Consider the following 385-residue polypeptide: 1-deoxy-D-xylulose 5-phosphate reductoisomerase (385 aa).

Residues threonine 10, glycine 11, serine 12, isoleucine 13, glycine 36, asparagine 38, and asparagine 122 each contribute to the NADPH site. Residue lysine 123 participates in 1-deoxy-D-xylulose 5-phosphate binding. Glutamate 124 contributes to the NADPH binding site. Aspartate 148 is a binding site for Mn(2+). The 1-deoxy-D-xylulose 5-phosphate site is built by serine 149, glutamate 150, serine 174, and histidine 197. Residue glutamate 150 coordinates Mn(2+). Glycine 203 is an NADPH binding site. 4 residues coordinate 1-deoxy-D-xylulose 5-phosphate: serine 210, asparagine 215, lysine 216, and glutamate 219. Position 219 (glutamate 219) interacts with Mn(2+).

This sequence belongs to the DXR family. Mg(2+) is required as a cofactor. It depends on Mn(2+) as a cofactor.

It catalyses the reaction 2-C-methyl-D-erythritol 4-phosphate + NADP(+) = 1-deoxy-D-xylulose 5-phosphate + NADPH + H(+). The protein operates within isoprenoid biosynthesis; isopentenyl diphosphate biosynthesis via DXP pathway; isopentenyl diphosphate from 1-deoxy-D-xylulose 5-phosphate: step 1/6. Functionally, catalyzes the NADPH-dependent rearrangement and reduction of 1-deoxy-D-xylulose-5-phosphate (DXP) to 2-C-methyl-D-erythritol 4-phosphate (MEP). This chain is 1-deoxy-D-xylulose 5-phosphate reductoisomerase, found in Geobacter sp. (strain M21).